The sequence spans 334 residues: Probable 2-ketogluconate reductase (334 aa).

Residues 164 to 165, 244 to 246, and D270 each bind NAD(+); these read RI and AGR. Residue R246 is part of the active site. Residue E275 is part of the active site. The Proton donor role is filled by H294. 294–297 contributes to the NAD(+) binding site; it reads HIGT.

Belongs to the D-isomer specific 2-hydroxyacid dehydrogenase family.

The protein resides in the cytoplasm. It catalyses the reaction D-gluconate + NADP(+) = 2-dehydro-D-gluconate + NADPH + H(+). Its function is as follows. Catalyzes the NADPH-dependent reduction of 2,5-diketo-D-gluconate (25DKG) to 5-keto-D-gluconate (5KDG), 2-keto-D-gluconate (2KDG) to D-gluconate, and 2-keto-L-gulonate (2KLG) to L-idonate (IA). The protein is Probable 2-ketogluconate reductase (tkrA) of Dictyostelium discoideum (Social amoeba).